The chain runs to 382 residues: Queuine tRNA-ribosyltransferase (382 aa).

D96 (proton acceptor) is an active-site residue. Residues 96–100 (DSGGF), D151, Q194, and G221 contribute to the substrate site. The segment at 252 to 258 (GVGAPDS) is RNA binding. The active-site Nucleophile is D271. The segment at 276–280 (TRIAR) is RNA binding; important for wobble base 34 recognition. Residues C309, C311, C314, and H340 each coordinate Zn(2+).

It belongs to the queuine tRNA-ribosyltransferase family. In terms of assembly, homodimer. Within each dimer, one monomer is responsible for RNA recognition and catalysis, while the other monomer binds to the replacement base PreQ1. Requires Zn(2+) as cofactor.

The enzyme catalyses 7-aminomethyl-7-carbaguanine + guanosine(34) in tRNA = 7-aminomethyl-7-carbaguanosine(34) in tRNA + guanine. The protein operates within tRNA modification; tRNA-queuosine biosynthesis. In terms of biological role, catalyzes the base-exchange of a guanine (G) residue with the queuine precursor 7-aminomethyl-7-deazaguanine (PreQ1) at position 34 (anticodon wobble position) in tRNAs with GU(N) anticodons (tRNA-Asp, -Asn, -His and -Tyr). Catalysis occurs through a double-displacement mechanism. The nucleophile active site attacks the C1' of nucleotide 34 to detach the guanine base from the RNA, forming a covalent enzyme-RNA intermediate. The proton acceptor active site deprotonates the incoming PreQ1, allowing a nucleophilic attack on the C1' of the ribose to form the product. After dissociation, two additional enzymatic reactions on the tRNA convert PreQ1 to queuine (Q), resulting in the hypermodified nucleoside queuosine (7-(((4,5-cis-dihydroxy-2-cyclopenten-1-yl)amino)methyl)-7-deazaguanosine). This Lactococcus lactis subsp. cremoris (strain MG1363) protein is Queuine tRNA-ribosyltransferase.